We begin with the raw amino-acid sequence, 253 residues long: Phosphoadenosine 5'-phosphosulfate reductase (253 aa).

The active-site Nucleophile; cysteine thiosulfonate intermediate is C239.

This sequence belongs to the PAPS reductase family. CysH subfamily.

The protein localises to the cytoplasm. The catalysed reaction is [thioredoxin]-disulfide + sulfite + adenosine 3',5'-bisphosphate + 2 H(+) = [thioredoxin]-dithiol + 3'-phosphoadenylyl sulfate. Its pathway is sulfur metabolism; hydrogen sulfide biosynthesis; sulfite from sulfate: step 3/3. Catalyzes the formation of sulfite from phosphoadenosine 5'-phosphosulfate (PAPS) using thioredoxin as an electron donor. The protein is Phosphoadenosine 5'-phosphosulfate reductase of Aliivibrio salmonicida (strain LFI1238) (Vibrio salmonicida (strain LFI1238)).